The primary structure comprises 348 residues: Delta(6)-protoilludene synthase 18 (348 aa).

Mg(2+) contacts are provided by Asp87, Asn223, Ser227, and Glu231. A DDXXD motif motif is present at residues 87 to 91 (DEYTD). An NSE/DTE motif motif is present at residues 223–231 (NDLVSYNRE). (2E,6E)-farnesyl diphosphate contacts are provided by Arg311 and Tyr312.

Belongs to the terpene synthase family. Requires Mg(2+) as cofactor.

It catalyses the reaction (2E,6E)-farnesyl diphosphate = Delta(6)-protoilludene + diphosphate. Terpene cyclase that catalyzes the cyclization of farnesyl diphosphate (FPP) to delta(6)-protoilludene. This chain is Delta(6)-protoilludene synthase 18, found in Postia placenta (strain ATCC 44394 / Madison 698-R) (Brown rot fungus).